Consider the following 278-residue polypeptide: Undecaprenyl-diphosphatase 1 (278 aa).

Transmembrane regions (helical) follow at residues 85-105 (LNVI…EKTI), 108-128 (ALFS…VILW), 188-208 (VATE…TAYE), 218-238 (VDAL…AFAC), and 254-274 (FAWY…SGAL).

Belongs to the UppP family.

It is found in the cell inner membrane. The enzyme catalyses di-trans,octa-cis-undecaprenyl diphosphate + H2O = di-trans,octa-cis-undecaprenyl phosphate + phosphate + H(+). Its function is as follows. Catalyzes the dephosphorylation of undecaprenyl diphosphate (UPP). Confers resistance to bacitracin. This Paraburkholderia xenovorans (strain LB400) protein is Undecaprenyl-diphosphatase 1.